Reading from the N-terminus, the 166-residue chain is Large ribosomal subunit protein uL10 (166 aa).

This sequence belongs to the universal ribosomal protein uL10 family. Part of the ribosomal stalk of the 50S ribosomal subunit. The N-terminus interacts with L11 and the large rRNA to form the base of the stalk. The C-terminus forms an elongated spine to which L12 dimers bind in a sequential fashion forming a multimeric L10(L12)X complex.

Functionally, forms part of the ribosomal stalk, playing a central role in the interaction of the ribosome with GTP-bound translation factors. The sequence is that of Large ribosomal subunit protein uL10 from Staphylococcus carnosus (strain TM300).